The primary structure comprises 264 residues: MTMEILLVNDDGIYSNGLLALKNVIGEEFDANVTVVAPTNQQSGIGRAISLFEPLRITKTKLADCSEGYAVSGTPTDCVVLGIHQVLKKVPDYVISGINIGENLGTEITTSGTLGAAFEGAHHGAKALACSLQVTMDHLKFKEGESPIEFLTTARIVKNVFKKFLGDEFPCDVVNINVPDNATENTPVEITKLAKRMYSMHVEERIDPRSRSYYWLDGYPVMDEEDGTDVYAVRNKRNVSVTPLTLDNTAKNLDEFKEKYAKKF.

D10, D11, S43, and N99 together coordinate a divalent metal cation.

This sequence belongs to the SurE nucleotidase family. It depends on a divalent metal cation as a cofactor.

It is found in the cytoplasm. It catalyses the reaction a ribonucleoside 5'-phosphate + H2O = a ribonucleoside + phosphate. Its function is as follows. Nucleotidase that shows phosphatase activity on nucleoside 5'-monophosphates. The polypeptide is 5'-nucleotidase SurE (Methanococcus maripaludis (strain C7 / ATCC BAA-1331)).